Reading from the N-terminus, the 174-residue chain is Protein GrpE (174 aa).

The interval 1–35 (MAQDIKNEEVEEVQEEEVVKTAEETTPEKSELDLA) is disordered. Over residues 17-35 (EVVKTAEETTPEKSELDLA) the composition is skewed to basic and acidic residues.

Belongs to the GrpE family. As to quaternary structure, homodimer.

It localises to the cytoplasm. In terms of biological role, participates actively in the response to hyperosmotic and heat shock by preventing the aggregation of stress-denatured proteins, in association with DnaK and GrpE. It is the nucleotide exchange factor for DnaK and may function as a thermosensor. Unfolded proteins bind initially to DnaJ; upon interaction with the DnaJ-bound protein, DnaK hydrolyzes its bound ATP, resulting in the formation of a stable complex. GrpE releases ADP from DnaK; ATP binding to DnaK triggers the release of the substrate protein, thus completing the reaction cycle. Several rounds of ATP-dependent interactions between DnaJ, DnaK and GrpE are required for fully efficient folding. The protein is Protein GrpE of Streptococcus pneumoniae serotype 4 (strain ATCC BAA-334 / TIGR4).